Reading from the N-terminus, the 179-residue chain is ATP synthase subunit delta (179 aa).

Belongs to the ATPase delta chain family. As to quaternary structure, F-type ATPases have 2 components, F(1) - the catalytic core - and F(0) - the membrane proton channel. F(1) has five subunits: alpha(3), beta(3), gamma(1), delta(1), epsilon(1). F(0) has three main subunits: a(1), b(2) and c(10-14). The alpha and beta chains form an alternating ring which encloses part of the gamma chain. F(1) is attached to F(0) by a central stalk formed by the gamma and epsilon chains, while a peripheral stalk is formed by the delta and b chains.

The protein localises to the cell membrane. Its function is as follows. F(1)F(0) ATP synthase produces ATP from ADP in the presence of a proton or sodium gradient. F-type ATPases consist of two structural domains, F(1) containing the extramembraneous catalytic core and F(0) containing the membrane proton channel, linked together by a central stalk and a peripheral stalk. During catalysis, ATP synthesis in the catalytic domain of F(1) is coupled via a rotary mechanism of the central stalk subunits to proton translocation. This protein is part of the stalk that links CF(0) to CF(1). It either transmits conformational changes from CF(0) to CF(1) or is implicated in proton conduction. The sequence is that of ATP synthase subunit delta from Ureaplasma urealyticum serovar 10 (strain ATCC 33699 / Western).